Consider the following 1021-residue polypeptide: Immunoglobulin superfamily member 2 (1021 aa).

A signal peptide spans 1–20; the sequence is MAGISYVASFFLLLTKLSIG. The Extracellular portion of the chain corresponds to 21 to 954; that stretch reads QREVTVQKGP…LPSRICSSAP (934 aa). 7 consecutive Ig-like C2-type domains span residues 22-139, 144-265, 279-389, 408-525, 541-651, 656-794, and 808-925; these read REVT…AKTN, PDTL…WMFI, PAVK…RTGS, PAAR…RDLS, LQVS…NSLY, PRAS…WHKL, and PTGS…KWIN. 2 disulfides stabilise this stretch: Cys43–Cys121 and Cys168–Cys249. N-linked (GlcNAc...) asparagine glycosylation is present at Asn44. The EWI motif signature appears at 253-255; it reads EWI. Disulfide bonds link Cys304–Cys377, Cys434–Cys511, Cys562–Cys640, Cys697–Cys778, and Cys834–Cys909. N-linked (GlcNAc...) asparagine glycosylation is present at Asn322. Residues 955–975 traverse the membrane as a helical segment; the sequence is LLYFLFICPFVLLLLLLISLL. Residues 976 to 1021 lie on the Cytoplasmic side of the membrane; it reads CLYWKARKLSTLRSNTRKEKALWVDLKEAGGVTTNRREDEEEDEGN.

N-glycosylated. Expressed in lung, thymus and small intestine. Detected in cutaneous dendritic cells, activated T-cells, monocytes and granulocytes as well as with epithelial cells with dendritic morphology. Expressed in some leukemic cells, the CD4(+) CD56(+) blastic tumor cells, as well as in Langerhans cells from LCH (Langerhans cell histiocytosis) patients.

The protein localises to the membrane. Plays a role as inhibitor of T-cells proliferation induced by CD3. Inhibits expression of IL2RA on activated T-cells and secretion of IL2. Inhibits tyrosine kinases that are required for IL2 production and cellular proliferation. Inhibits phospholipase C-gamma-1/PLCG1 phosphorylation and subsequent CD3-induced changes in intracellular free calcium. Prevents nuclear translocation of nuclear factor of activated T-cell to the nucleus. Plays a role in the inhibition of T-cell proliferation via IL10 secretion by cutaneous dendritic cells. May be a marker of CD4(+) CD56(+) leukemic tumor cells. The sequence is that of Immunoglobulin superfamily member 2 (CD101) from Homo sapiens (Human).